Here is a 79-residue protein sequence, read N- to C-terminus: Small ribosomal subunit protein bS16cz (79 aa).

This sequence belongs to the bacterial ribosomal protein bS16 family.

It is found in the plastid. It localises to the chloroplast. The sequence is that of Small ribosomal subunit protein bS16cz from Arabidopsis thaliana (Mouse-ear cress).